Reading from the N-terminus, the 346-residue chain is Phosphate acyltransferase (346 aa).

The protein belongs to the PlsX family. In terms of assembly, homodimer. Probably interacts with PlsY.

The protein localises to the cytoplasm. It catalyses the reaction a fatty acyl-[ACP] + phosphate = an acyl phosphate + holo-[ACP]. The protein operates within lipid metabolism; phospholipid metabolism. Catalyzes the reversible formation of acyl-phosphate (acyl-PO(4)) from acyl-[acyl-carrier-protein] (acyl-ACP). This enzyme utilizes acyl-ACP as fatty acyl donor, but not acyl-CoA. The sequence is that of Phosphate acyltransferase from Brucella abortus (strain S19).